The following is a 237-amino-acid chain: Phosphoribosylaminoimidazole-succinocarboxamide synthase (237 aa).

It belongs to the SAICAR synthetase family.

It catalyses the reaction 5-amino-1-(5-phospho-D-ribosyl)imidazole-4-carboxylate + L-aspartate + ATP = (2S)-2-[5-amino-1-(5-phospho-beta-D-ribosyl)imidazole-4-carboxamido]succinate + ADP + phosphate + 2 H(+). Its pathway is purine metabolism; IMP biosynthesis via de novo pathway; 5-amino-1-(5-phospho-D-ribosyl)imidazole-4-carboxamide from 5-amino-1-(5-phospho-D-ribosyl)imidazole-4-carboxylate: step 1/2. The polypeptide is Phosphoribosylaminoimidazole-succinocarboxamide synthase (Oceanobacillus iheyensis (strain DSM 14371 / CIP 107618 / JCM 11309 / KCTC 3954 / HTE831)).